The primary structure comprises 341 residues: Nucleoid-associated protein Sden_2335 (341 aa).

The protein belongs to the YejK family.

The protein resides in the cytoplasm. The protein localises to the nucleoid. The protein is Nucleoid-associated protein Sden_2335 of Shewanella denitrificans (strain OS217 / ATCC BAA-1090 / DSM 15013).